Here is a 1201-residue protein sequence, read N- to C-terminus: ATP-dependent helicase/deoxyribonuclease subunit B (1201 aa).

This sequence belongs to the helicase family. AddB/RexB type 2 subfamily. In terms of assembly, heterodimer of AddA and RexB. The cofactor is Mg(2+).

Functionally, the heterodimer acts as both an ATP-dependent DNA helicase and an ATP-dependent, dual-direction single-stranded exonuclease. Recognizes the chi site generating a DNA molecule suitable for the initiation of homologous recombination. This subunit has 5' -&gt; 3' nuclease activity but not helicase activity. In Levilactobacillus brevis (strain ATCC 367 / BCRC 12310 / CIP 105137 / JCM 1170 / LMG 11437 / NCIMB 947 / NCTC 947) (Lactobacillus brevis), this protein is ATP-dependent helicase/deoxyribonuclease subunit B.